The sequence spans 551 residues: Urocanate hydratase (551 aa).

Residues 48–49 (GG), glutamine 126, 172–174 (GMG), glutamate 192, arginine 197, 238–239 (NA), 259–263 (QTSAH), 269–270 (YI), and tyrosine 318 contribute to the NAD(+) site. Residue cysteine 406 is part of the active site. Glycine 488 lines the NAD(+) pocket.

It belongs to the urocanase family. Requires NAD(+) as cofactor.

The protein localises to the cytoplasm. It catalyses the reaction 4-imidazolone-5-propanoate = trans-urocanate + H2O. The protein operates within amino-acid degradation; L-histidine degradation into L-glutamate; N-formimidoyl-L-glutamate from L-histidine: step 2/3. Catalyzes the conversion of urocanate to 4-imidazolone-5-propionate. This is Urocanate hydratase from Geobacillus kaustophilus (strain HTA426).